Consider the following 311-residue polypeptide: Forkhead box protein R2 (311 aa).

Disordered regions lie at residues 56–76 (PPEM…PCEP) and 90–171 (LGSQ…QSPE). Basic and acidic residues predominate over residues 115–128 (QKDEGSNCSEDKVV). Over residues 129 to 143 (ESLPSSSSEQSPLQK) the composition is skewed to low complexity. Over residues 153–164 (ELTEEEAEEPDD) the composition is skewed to acidic residues. A DNA-binding region (fork-head) is located at residues 192–294 (RPPLNCSHLI…RVLAFAQRER (103 aa)).

Expressed in breast cancer cell lines and primary cancer.

The protein localises to the nucleus. In Homo sapiens (Human), this protein is Forkhead box protein R2 (FOXR2).